A 70-amino-acid polypeptide reads, in one-letter code: MWFEVLPGIAVMGVCLFIPGMATARIHRFSNGGKEKRVAHYPYQWYLMERDRRVSGVNRSYVSKGLENID.

The helical transmembrane segment at 1–21 (MWFEVLPGIAVMGVCLFIPGM) threads the bilayer.

This sequence belongs to the complex I NDUFA1 subunit family. In terms of assembly, complex I is composed of 45 different subunits.

It is found in the mitochondrion inner membrane. Its function is as follows. Accessory subunit of the mitochondrial membrane respiratory chain NADH dehydrogenase (Complex I), that is believed not to be involved in catalysis. Complex I functions in the transfer of electrons from NADH to the respiratory chain. The immediate electron acceptor for the enzyme is believed to be ubiquinone. The polypeptide is NADH dehydrogenase [ubiquinone] 1 alpha subcomplex subunit 1 (NDUFA1) (Bos taurus (Bovine)).